Consider the following 266-residue polypeptide: Mediator of RNA polymerase II transcription subunit 18 (266 aa).

The protein belongs to the Mediator complex subunit 18 family. Component of the Mediator complex.

It localises to the nucleus. Its function is as follows. Component of the Mediator complex, a coactivator involved in the regulated transcription of nearly all RNA polymerase II-dependent genes. Mediator functions as a bridge to convey information from gene-specific regulatory proteins to the basal RNA polymerase II transcription machinery. Mediator is recruited to promoters by direct interactions with regulatory proteins and serves as a scaffold for the assembly of a functional preinitiation complex with RNA polymerase II and the general transcription factors. This Candida glabrata (strain ATCC 2001 / BCRC 20586 / JCM 3761 / NBRC 0622 / NRRL Y-65 / CBS 138) (Yeast) protein is Mediator of RNA polymerase II transcription subunit 18 (SRB5).